The chain runs to 330 residues: Phenylalanine--tRNA ligase alpha subunit (330 aa).

Residue glutamate 257 coordinates Mg(2+).

It belongs to the class-II aminoacyl-tRNA synthetase family. Phe-tRNA synthetase alpha subunit type 1 subfamily. In terms of assembly, tetramer of two alpha and two beta subunits. The cofactor is Mg(2+).

It is found in the cytoplasm. It carries out the reaction tRNA(Phe) + L-phenylalanine + ATP = L-phenylalanyl-tRNA(Phe) + AMP + diphosphate + H(+). The polypeptide is Phenylalanine--tRNA ligase alpha subunit (Acaryochloris marina (strain MBIC 11017)).